A 389-amino-acid chain; its full sequence is GTPase Obg (389 aa).

The region spanning 1–159 (MKFVDEAVIK…RELRLELLLL (159 aa)) is the Obg domain. The 174-residue stretch at 160–333 (ADVGLLGMPN…LAEKLFDFIK (174 aa)) folds into the OBG-type G domain. GTP contacts are provided by residues 166–173 (GMPNAGKS), 191–195 (FTTLV), 213–216 (DIPG), 283–286 (NKTD), and 314–316 (SAA). The Mg(2+) site is built by serine 173 and threonine 193.

The protein belongs to the TRAFAC class OBG-HflX-like GTPase superfamily. OBG GTPase family. As to quaternary structure, monomer. It depends on Mg(2+) as a cofactor.

It localises to the cytoplasm. Functionally, an essential GTPase which binds GTP, GDP and possibly (p)ppGpp with moderate affinity, with high nucleotide exchange rates and a fairly low GTP hydrolysis rate. Plays a role in control of the cell cycle, stress response, ribosome biogenesis and in those bacteria that undergo differentiation, in morphogenesis control. The sequence is that of GTPase Obg from Shewanella amazonensis (strain ATCC BAA-1098 / SB2B).